A 568-amino-acid polypeptide reads, in one-letter code: Periplasmic trehalase (568 aa).

The first 39 residues, 1-39, serve as a signal peptide directing secretion; sequence MPHVVARSGDVMSSAAPPSCTSLLGLSLSMFVAPCTLTA. Substrate is bound by residues Arg169, 176 to 177, Asn213, 222 to 224, 294 to 296, and Gly327; these read WD, RSQ, and RPE. Catalysis depends on proton donor/acceptor residues Asp329 and Glu511. Position 526 (Glu526) interacts with substrate.

The protein belongs to the glycosyl hydrolase 37 family.

The protein localises to the periplasm. It carries out the reaction alpha,alpha-trehalose + H2O = alpha-D-glucose + beta-D-glucose. Functionally, provides the cells with the ability to utilize trehalose at high osmolarity by splitting it into glucose molecules that can subsequently be taken up by the phosphotransferase-mediated uptake system. In Xanthomonas oryzae pv. oryzae (strain MAFF 311018), this protein is Periplasmic trehalase.